Here is a 182-residue protein sequence, read N- to C-terminus: Ribosome-recycling factor (182 aa).

The protein belongs to the RRF family.

It is found in the cytoplasm. Its function is as follows. Responsible for the release of ribosomes from messenger RNA at the termination of protein biosynthesis. May increase the efficiency of translation by recycling ribosomes from one round of translation to another. The sequence is that of Ribosome-recycling factor from Nostoc punctiforme (strain ATCC 29133 / PCC 73102).